A 181-amino-acid polypeptide reads, in one-letter code: Dual-action ribosomal maturation protein DarP (181 aa).

The disordered stretch occupies residues 1–24 (MTGIKRPMSQYQDDNEWEDWGPSK).

This sequence belongs to the DarP family.

It is found in the cytoplasm. In terms of biological role, member of a network of 50S ribosomal subunit biogenesis factors which assembles along the 30S-50S interface, preventing incorrect 23S rRNA structures from forming. Promotes peptidyl transferase center (PTC) maturation. This is Dual-action ribosomal maturation protein DarP from Aeromonas hydrophila subsp. hydrophila (strain ATCC 7966 / DSM 30187 / BCRC 13018 / CCUG 14551 / JCM 1027 / KCTC 2358 / NCIMB 9240 / NCTC 8049).